A 281-amino-acid chain; its full sequence is MARKRITRRDPEEELSKFLRHEPGQGQETRKLSSQLTSLKKERRRGLLTRLGSIMAVCLLAIAFLTYYVSPLADVSTVRVLGADDLDGKSMVEVAQIKASDKVVDALRGQKKISKKLAAKYPEVASVTLSVKGLNTLNMQVHERKVSGYIKDGSSYREILANGELGTKSLAWREFDHDKPLFISYSKQVALKTNLKIFNSFPEYFKKQVKMLSGNTRRKTQMILVMKDGNVIIGNTETIKSKVKYYNSIKQDLTTNSVIDMEVGAFTRPLTSAEKKAYGLS.

Positions 1–36 (MARKRITRRDPEEELSKFLRHEPGQGQETRKLSSQL) are disordered. The Cytoplasmic portion of the chain corresponds to 1–46 (MARKRITRRDPEEELSKFLRHEPGQGQETRKLSSQLTSLKKERRRG). A compositionally biased stretch (basic and acidic residues) spans 8-31 (RRDPEEELSKFLRHEPGQGQETRK). The chain crosses the membrane as a helical span at residues 47-69 (LLTRLGSIMAVCLLAIAFLTYYV). Topologically, residues 70 to 281 (SPLADVSTVR…SAEKKAYGLS (212 aa)) are extracellular. One can recognise a POTRA domain in the interval 73-144 (ADVSTVRVLG…NTLNMQVHER (72 aa)).

Belongs to the FtsQ/DivIB family. DivIB subfamily.

It is found in the cell membrane. Its function is as follows. Cell division protein that may be involved in stabilizing or promoting the assembly of the division complex. This is Cell division protein DivIB from Lactobacillus delbrueckii subsp. bulgaricus (strain ATCC 11842 / DSM 20081 / BCRC 10696 / JCM 1002 / NBRC 13953 / NCIMB 11778 / NCTC 12712 / WDCM 00102 / Lb 14).